A 445-amino-acid chain; its full sequence is Tubulin beta-2 chain (445 aa).

GTP is bound by residues Gln11, Glu69, Ser138, Gly142, Thr143, Gly144, Asn204, and Asn226. Glu69 is a Mg(2+) binding site. Residues 424–445 (QYQDATAEDEGEFDEDEEVEEA) form a disordered region. Acidic residues predominate over residues 429–445 (TAEDEGEFDEDEEVEEA).

Belongs to the tubulin family. In terms of assembly, dimer of alpha and beta chains. A typical microtubule is a hollow water-filled tube with an outer diameter of 25 nm and an inner diameter of 15 nM. Alpha-beta heterodimers associate head-to-tail to form protofilaments running lengthwise along the microtubule wall with the beta-tubulin subunit facing the microtubule plus end conferring a structural polarity. Microtubules usually have 13 protofilaments but different protofilament numbers can be found in some organisms and specialized cells. Mg(2+) is required as a cofactor.

The protein localises to the cytoplasm. The protein resides in the cytoskeleton. Functionally, tubulin is the major constituent of microtubules, a cylinder consisting of laterally associated linear protofilaments composed of alpha- and beta-tubulin heterodimers. Microtubules grow by the addition of GTP-tubulin dimers to the microtubule end, where a stabilizing cap forms. Below the cap, tubulin dimers are in GDP-bound state, owing to GTPase activity of alpha-tubulin. The polypeptide is Tubulin beta-2 chain (TUB-2) (Echinococcus multilocularis (Fox tapeworm)).